The chain runs to 429 residues: Glutamate-1-semialdehyde 2,1-aminomutase 1 (429 aa).

Position 268 is an N6-(pyridoxal phosphate)lysine (Lys-268).

This sequence belongs to the class-III pyridoxal-phosphate-dependent aminotransferase family. HemL subfamily. In terms of assembly, homodimer. The cofactor is pyridoxal 5'-phosphate.

Its subcellular location is the cytoplasm. It catalyses the reaction (S)-4-amino-5-oxopentanoate = 5-aminolevulinate. It participates in porphyrin-containing compound metabolism; protoporphyrin-IX biosynthesis; 5-aminolevulinate from L-glutamyl-tRNA(Glu): step 2/2. This Lysinibacillus sphaericus (strain C3-41) protein is Glutamate-1-semialdehyde 2,1-aminomutase 1.